Reading from the N-terminus, the 459-residue chain is Cysteine--tRNA ligase (459 aa).

Cysteine 31 provides a ligand contact to Zn(2+). The 'HIGH' region motif lies at 33-43 (PTVYYNPHIGN). Zn(2+)-binding residues include cysteine 216, histidine 241, and glutamate 245. Residues 274–278 (KMSKS) carry the 'KMSKS' region motif. Lysine 277 lines the ATP pocket.

The protein belongs to the class-I aminoacyl-tRNA synthetase family. In terms of assembly, monomer. It depends on Zn(2+) as a cofactor.

It is found in the cytoplasm. It carries out the reaction tRNA(Cys) + L-cysteine + ATP = L-cysteinyl-tRNA(Cys) + AMP + diphosphate. This Rickettsia peacockii (strain Rustic) protein is Cysteine--tRNA ligase.